The following is a 220-amino-acid chain: Cytidylate kinase (220 aa).

10–18 (GPASSGKST) lines the ATP pocket.

The protein belongs to the cytidylate kinase family. Type 1 subfamily.

The protein resides in the cytoplasm. It carries out the reaction CMP + ATP = CDP + ADP. The catalysed reaction is dCMP + ATP = dCDP + ADP. This is Cytidylate kinase from Lactococcus lactis subsp. lactis (strain IL1403) (Streptococcus lactis).